Consider the following 2223-residue polypeptide: Sperm-associated antigen 17 (2223 aa).

Composition is skewed to basic and acidic residues over residues 144–172 and 200–212; these read RENE…EKKA and RRGE…RYID. The interval 144–214 is disordered; that stretch reads RENEKKVIED…DHTNRYIDDE (71 aa). The stretch at 266–295 forms a coiled coil; sequence NQQQEVLLQSEDLEAEKLKKENAIKELKTF. Disordered stretches follow at residues 387-416, 680-710, 731-762, 950-1015, 1179-1212, and 1345-1378; these read MPTS…PPPV, MSVQ…LNNL, PQHE…PKKM, EERL…EPKI, GKIK…PEPV, and ETIP…PPPE. Composition is skewed to basic and acidic residues over residues 743 to 756, 950 to 999, and 1182 to 1205; these read EIKD…DSHE, EERL…EQVK, and KGKE…KKEE. Residues 940 to 966 adopt a coiled-coil conformation; that stretch reads WKEEQHRLAEEERLREEKKAEKKGKEA. Polar residues predominate over residues 1345–1354; it reads ETIPSEITNT. Positions 1874 to 1907 form a coiled coil; sequence RHTASSKRWKEKIDKTRKEIETTQNYLMDIKNRI. Disordered stretches follow at residues 1938–1957 and 1962–2008; these read TKKN…DLNL and HKVS…SYEP. Residues 1988-1998 show a composition bias toward polar residues; that stretch reads TAQNQTENLTK.

Interacts (via the C-terminus) with SPAG6; the interaction probably occurs on polymerized microtubules. Highly expressed in testis. Expressed in organs that contain cilia-bearing cells including brain, oviduct, lung, and uterus.

It is found in the cytoplasm. It localises to the cytoskeleton. Its subcellular location is the flagellum axoneme. The protein resides in the cytoplasmic vesicle. The protein localises to the secretory vesicle. It is found in the acrosome. It localises to the golgi apparatus. Its function is as follows. Component of the central pair apparatus of ciliary axonemes. Plays a critical role in the function and structure of motile cilia. May play a role in endochondral bone formation, most likely because of a function in primary cilia of chondrocytes and osteoblasts. Essential for normal spermatogenesis and male fertility. Required for normal manchette structure, transport of proteins along the manchette microtubules and formation of the sperm head and flagellum. Essential for sperm flagellum development and proper assembly of the respiratory motile cilia central pair apparatus, but not the brain ependymal cilia. This is Sperm-associated antigen 17 (SPAG17) from Homo sapiens (Human).